Consider the following 469-residue polypeptide: Sulfate adenylyltransferase subunit 1 (469 aa).

The region spanning 22–237 (KEVLRFITCG…LEEVPVKSEE (216 aa)) is the tr-type G domain. Positions 31 to 38 (GSVDDGKS) are G1. Residue 31–38 (GSVDDGKS) coordinates GTP. The segment at 89–93 (GITID) is G2. A G3 region spans residues 110 to 113 (DTPG). Residues 110–114 (DTPGH) and 165–168 (NKMD) each bind GTP. Residues 165 to 168 (NKMD) form a G4 region. Residues 202 to 204 (SAK) form a G5 region.

It belongs to the TRAFAC class translation factor GTPase superfamily. Classic translation factor GTPase family. CysN/NodQ subfamily. Heterodimer composed of CysD, the smaller subunit, and CysN.

The enzyme catalyses sulfate + ATP + H(+) = adenosine 5'-phosphosulfate + diphosphate. The protein operates within sulfur metabolism; hydrogen sulfide biosynthesis; sulfite from sulfate: step 1/3. In terms of biological role, with CysD forms the ATP sulfurylase (ATPS) that catalyzes the adenylation of sulfate producing adenosine 5'-phosphosulfate (APS) and diphosphate, the first enzymatic step in sulfur assimilation pathway. APS synthesis involves the formation of a high-energy phosphoric-sulfuric acid anhydride bond driven by GTP hydrolysis by CysN coupled to ATP hydrolysis by CysD. In Methylorubrum extorquens (strain CM4 / NCIMB 13688) (Methylobacterium extorquens), this protein is Sulfate adenylyltransferase subunit 1.